Reading from the N-terminus, the 3066-residue chain is Genome polyprotein (3066 aa).

A Peptidase S30 domain is found at 176–317 (LKKAVGSGKV…LDNVYTIEHY (142 aa)). Active-site for P1 proteinase activity residues include histidine 230, glutamate 239, and serine 271. Residues 370 to 373 (KLSC) carry the Involved in interaction with stylet and aphid transmission motif. The Involved in virions binding and aphid transmission motif lies at 626–628 (PTK). Positions 652-774 (MYIAKEGYCY…EGEMKHYRVG (123 aa)) constitute a Peptidase C6 domain. Active-site for helper component proteinase activity residues include cysteine 660 and histidine 733. Residues 1245 to 1397 (TITLSTSTEF…TQHPVKLKVE (153 aa)) enclose the Helicase ATP-binding domain. An ATP-binding site is contributed by 1258-1265 (GAVGSGKS). A DECH box motif is present at residues 1347-1350 (DECH). Residues 1416-1575 (DMVQYGHNLL…GLPVTTQGVS (160 aa)) form the Helicase C-terminal domain. The Nuclear localization signal signature appears at 1900-1909 (KKGKQKGSTH). The residue at position 1924 (tyrosine 1924) is an O-(5'-phospho-RNA)-tyrosine. The Peptidase C4 domain maps to 2046-2264 (SKSTYKGLRD…IAWGSLNLVD (219 aa)). Residues histidine 2091, aspartate 2126, and cysteine 2196 each act as for nuclear inclusion protein A activity in the active site. The RdRp catalytic domain maps to 2530–2654 (WVYCHADGSQ…AVQKEDVWLY (125 aa)). The tract at residues 2797 to 2839 (EVYESVSTQSSKKEEEKDAGADEREKDKGKGPADKDVGAGSKG) is disordered. Positions 2807-2833 (SKKEEEKDAGADEREKDKGKGPADKDV) are enriched in basic and acidic residues. Threonine 3048 carries the post-translational modification Phosphothreonine.

Belongs to the potyviridae genome polyprotein family. In terms of assembly, interacts with host eIF4E protein (via cap-binding region); this interaction mediates the translation of the VPg-viral RNA conjugates. Part of a complex that comprises VPg, RNA, host EIF4E and EIF4G; this interaction mediates the translation of the VPg-viral RNA conjugates. In terms of processing, VPg is uridylylated by the polymerase and is covalently attached to the 5'-end of the genomic RNA. This uridylylated form acts as a nucleotide-peptide primer for the polymerase. Genome polyprotein of potyviruses undergoes post-translational proteolytic processing by the main proteinase NIa-pro resulting in the production of at least ten individual proteins. The P1 proteinase and the HC-pro cleave only their respective C-termini autocatalytically. 6K1 is essential for proper proteolytic separation of P3 from CI.

It localises to the host cytoplasmic vesicle. The protein localises to the host nucleus. The protein resides in the virion. The enzyme catalyses RNA(n) + a ribonucleoside 5'-triphosphate = RNA(n+1) + diphosphate. It carries out the reaction Hydrolyzes glutaminyl bonds, and activity is further restricted by preferences for the amino acids in P6 - P1' that vary with the species of potyvirus, e.g. Glu-Xaa-Xaa-Tyr-Xaa-Gln-|-(Ser or Gly) for the enzyme from tobacco etch virus. The natural substrate is the viral polyprotein, but other proteins and oligopeptides containing the appropriate consensus sequence are also cleaved.. The catalysed reaction is Hydrolyzes a Gly-|-Gly bond at its own C-terminus, commonly in the sequence -Tyr-Xaa-Val-Gly-|-Gly, in the processing of the potyviral polyprotein.. Required for aphid transmission and also has proteolytic activity. Only cleaves a Gly-Gly dipeptide at its own C-terminus. Interacts with virions and aphid stylets. Acts as a suppressor of RNA-mediated gene silencing, also known as post-transcriptional gene silencing (PTGS), a mechanism of plant viral defense that limits the accumulation of viral RNAs. May have RNA-binding activity. Its function is as follows. Has helicase activity. It may be involved in replication. In terms of biological role, indispensable for virus replication. Reduces the abundance of host transcripts related to jasmonic acid biosynthesis therefore altering the host defenses. In order to increase its own stability, decreases host protein degradation pathways. Functionally, indispensable for virus replication. Mediates the cap-independent, EIF4E-dependent translation of viral genomic RNAs. Binds to the cap-binding site of host EIF4E and thus interferes with the host EIF4E-dependent mRNA export and translation. VPg-RNA directly binds EIF4E and is a template for transcription. Also forms trimeric complexes with EIF4E-EIF4G, which are templates for translation. Its function is as follows. Has RNA-binding and proteolytic activities. In terms of biological role, an RNA-dependent RNA polymerase that plays an essential role in the virus replication. Functionally, involved in aphid transmission, cell-to-cell and systemis movement, encapsidation of the viral RNA and in the regulation of viral RNA amplification. This Bean common mosaic necrosis virus (strain NL-3) (BCMNV) protein is Genome polyprotein.